The primary structure comprises 196 residues: Early light-induced protein, chloroplastic (196 aa).

A chloroplast-targeting transit peptide spans 1–48 (MAVSSCQSIMSNSMTNISSRSRVNQFTNIPSVYIPTLRRNVSLKVRSM). The segment covering 47 to 57 (SMAEGEPKEQS) has biased composition (basic and acidic residues). The interval 47-81 (SMAEGEPKEQSKVAVDPTTPTASTPTPQPAYTRPP) is disordered. Transmembrane regions (helical) follow at residues 105–125 (LAMIGFVAAMGVEIAKGQGLS), 132–152 (GVAWFLGTSVLLSLASLIPFF), and 176–196 (IAMLGLVALAFTEFVKGTSLV).

It belongs to the ELIP/psbS family.

It localises to the plastid. It is found in the chloroplast membrane. Probably involved in the integration of pigments into the mature pigment-protein complexes. This Pisum sativum (Garden pea) protein is Early light-induced protein, chloroplastic.